The sequence spans 575 residues: V-type ATP synthase alpha chain (575 aa).

Residue 238–245 (GPFGAGKT) coordinates ATP.

It belongs to the ATPase alpha/beta chains family.

It carries out the reaction ATP + H2O + 4 H(+)(in) = ADP + phosphate + 5 H(+)(out). Functionally, produces ATP from ADP in the presence of a proton gradient across the membrane. The V-type alpha chain is a catalytic subunit. This chain is V-type ATP synthase alpha chain, found in Borreliella burgdorferi (strain ZS7) (Borrelia burgdorferi).